The chain runs to 153 residues: 6,7-dimethyl-8-ribityllumazine synthase (153 aa).

5-amino-6-(D-ribitylamino)uracil-binding positions include F21, 55–57 (AFE), and 79–81 (TVI). A (2S)-2-hydroxy-3-oxobutyl phosphate-binding site is contributed by 84–85 (AT). H87 serves as the catalytic Proton donor. Residue F112 participates in 5-amino-6-(D-ribitylamino)uracil binding. Residue R126 participates in (2S)-2-hydroxy-3-oxobutyl phosphate binding.

It belongs to the DMRL synthase family. In terms of assembly, forms an icosahedral capsid composed of 60 subunits, arranged as a dodecamer of pentamers.

The enzyme catalyses (2S)-2-hydroxy-3-oxobutyl phosphate + 5-amino-6-(D-ribitylamino)uracil = 6,7-dimethyl-8-(1-D-ribityl)lumazine + phosphate + 2 H2O + H(+). Its pathway is cofactor biosynthesis; riboflavin biosynthesis; riboflavin from 2-hydroxy-3-oxobutyl phosphate and 5-amino-6-(D-ribitylamino)uracil: step 1/2. In terms of biological role, catalyzes the formation of 6,7-dimethyl-8-ribityllumazine by condensation of 5-amino-6-(D-ribitylamino)uracil with 3,4-dihydroxy-2-butanone 4-phosphate. This is the penultimate step in the biosynthesis of riboflavin. This is 6,7-dimethyl-8-ribityllumazine synthase from Bacillus anthracis (strain A0248).